The sequence spans 192 residues: Ion-translocating oxidoreductase complex subunit A (192 aa).

A run of 6 helical transmembrane segments spans residues 5-25 (ILLI…FLGL), 39-59 (IGMS…AYLI), 63-83 (ILTP…VIAV), 102-122 (LLGI…VALL), 134-154 (VIYG…FAAL), and 171-191 (SIAL…TGLV).

Belongs to the NqrDE/RnfAE family. In terms of assembly, the complex is composed of six subunits: RnfA, RnfB, RnfC, RnfD, RnfE and RnfG.

Its subcellular location is the cell inner membrane. Part of a membrane-bound complex that couples electron transfer with translocation of ions across the membrane. The protein is Ion-translocating oxidoreductase complex subunit A of Pasteurella multocida (strain Pm70).